Reading from the N-terminus, the 185-residue chain is Large ribosomal subunit protein uL5 (185 aa).

The protein belongs to the universal ribosomal protein uL5 family. In terms of assembly, part of the 50S ribosomal subunit; part of the 5S rRNA/L5/L18/L25 subcomplex. Contacts the 5S rRNA and the P site tRNA. Forms a bridge to the 30S subunit in the 70S ribosome.

Functionally, this is one of the proteins that bind and probably mediate the attachment of the 5S RNA into the large ribosomal subunit, where it forms part of the central protuberance. In the 70S ribosome it contacts protein S13 of the 30S subunit (bridge B1b), connecting the 2 subunits; this bridge is implicated in subunit movement. Contacts the P site tRNA; the 5S rRNA and some of its associated proteins might help stabilize positioning of ribosome-bound tRNAs. This is Large ribosomal subunit protein uL5 from Rhodopseudomonas palustris (strain HaA2).